We begin with the raw amino-acid sequence, 345 residues long: Glycerol-3-phosphate dehydrogenase [NAD(P)+] (345 aa).

Residues Ser-11, Trp-12, His-32, Arg-33, and Lys-106 each contribute to the NADPH site. Lys-106, Gly-137, and Ser-139 together coordinate sn-glycerol 3-phosphate. Position 141 (Ala-141) interacts with NADPH. The sn-glycerol 3-phosphate site is built by Lys-192, Asp-245, Ser-255, Arg-256, and Asn-257. Catalysis depends on Lys-192, which acts as the Proton acceptor. Position 256 (Arg-256) interacts with NADPH. NADPH contacts are provided by Val-280 and Glu-282.

It belongs to the NAD-dependent glycerol-3-phosphate dehydrogenase family.

The protein resides in the cytoplasm. It catalyses the reaction sn-glycerol 3-phosphate + NAD(+) = dihydroxyacetone phosphate + NADH + H(+). The enzyme catalyses sn-glycerol 3-phosphate + NADP(+) = dihydroxyacetone phosphate + NADPH + H(+). The protein operates within membrane lipid metabolism; glycerophospholipid metabolism. Functionally, catalyzes the reduction of the glycolytic intermediate dihydroxyacetone phosphate (DHAP) to sn-glycerol 3-phosphate (G3P), the key precursor for phospholipid synthesis. The polypeptide is Glycerol-3-phosphate dehydrogenase [NAD(P)+] (Bacillus pumilus (strain SAFR-032)).